A 396-amino-acid polypeptide reads, in one-letter code: Actin-related protein 6 (396 aa).

It belongs to the actin family. ARP6 subfamily. In terms of assembly, interacts with CBX1 and CBX3.

It is found in the cytoplasm. The protein resides in the cytoskeleton. It localises to the nucleus. Its subcellular location is the nucleolus. Functionally, required for formation and/or maintenance of the proper nucleolar structure and function. Plays a dual role in the regulation of ribosomal DNA (rDNA) transcription. In the presence of high glucose, it maintains active rDNA transcription through H2A.Z deposition and under glucose starvation, is required for the repression of rDNA transcription, and this function may be independent of H2A.Z. The sequence is that of Actin-related protein 6 (ACTR6) from Gallus gallus (Chicken).